The chain runs to 95 residues: Co-chaperonin GroES (95 aa).

This sequence belongs to the GroES chaperonin family. As to quaternary structure, heptamer of 7 subunits arranged in a ring. Interacts with the chaperonin GroEL.

It is found in the cytoplasm. Its function is as follows. Together with the chaperonin GroEL, plays an essential role in assisting protein folding. The GroEL-GroES system forms a nano-cage that allows encapsulation of the non-native substrate proteins and provides a physical environment optimized to promote and accelerate protein folding. GroES binds to the apical surface of the GroEL ring, thereby capping the opening of the GroEL channel. The polypeptide is Co-chaperonin GroES (Nitratidesulfovibrio vulgaris (strain DSM 19637 / Miyazaki F) (Desulfovibrio vulgaris)).